The primary structure comprises 300 residues: Manganese-binding lipoprotein MntA (300 aa).

The signal sequence occupies residues 1 to 19 (MKKVCFSFVIMVIALIAAG). Cys20 is lipidated: N-palmitoyl cysteine. Cys20 carries the S-diacylglycerol cysteine lipid modification. Mn(2+) contacts are provided by His68, His130, Glu196, and Asp271.

Belongs to the bacterial solute-binding protein 9 family.

The protein localises to the cell membrane. Its function is as follows. Probably part of ATP-binding cassette (ABC) transport system MntABCD involved in manganese import. Binds manganese and delivers it to the membrane permease for translocation into the cytoplasm. This is Manganese-binding lipoprotein MntA (mntA) from Halalkalibacterium halodurans (strain ATCC BAA-125 / DSM 18197 / FERM 7344 / JCM 9153 / C-125) (Bacillus halodurans).